The sequence spans 88 residues: U18-hexatoxin-Hi1a (88 aa).

An N-terminal signal peptide occupies residues 1–17 (MRIYSLLILSFLLLASA). A propeptide spanning residues 18–47 (VLINSAEMPRSEKSLLYSIMQGREDSEEGR) is cleaved from the precursor. 4 disulfides stabilise this stretch: Cys48-Cys63, Cys55-Cys69, Cys62-Cys81, and Cys71-Cys79.

It belongs to the neurotoxin 07 (Beta/delta-agtx) family. 02 (aga-3) subfamily. As to expression, expressed by the venom gland.

The protein resides in the secreted. Its function is as follows. Weak insecticidal toxin with probable ion channel impairing activity. In vivo, induces paralysis when injected into sheep blowflies (L.cuprina). Shows weak toxicity, since it is only toxic at high doses, and flies recover within 24 hours. The protein is U18-hexatoxin-Hi1a of Hadronyche infensa (Fraser island funnel-web spider).